The primary structure comprises 165 residues: 2-C-methyl-D-erythritol 2,4-cyclodiphosphate synthase (165 aa).

A divalent metal cation is bound by residues Asp12 and His14. 4-CDP-2-C-methyl-D-erythritol 2-phosphate is bound by residues 12-14 (DIH) and 38-39 (HS). His46 contacts a divalent metal cation. 4-CDP-2-C-methyl-D-erythritol 2-phosphate-binding positions include 60–62 (DIG), 136–139 (TTNE), and Arg146.

Belongs to the IspF family. Homotrimer. Requires a divalent metal cation as cofactor.

The enzyme catalyses 4-CDP-2-C-methyl-D-erythritol 2-phosphate = 2-C-methyl-D-erythritol 2,4-cyclic diphosphate + CMP. It participates in isoprenoid biosynthesis; isopentenyl diphosphate biosynthesis via DXP pathway; isopentenyl diphosphate from 1-deoxy-D-xylulose 5-phosphate: step 4/6. Functionally, involved in the biosynthesis of isopentenyl diphosphate (IPP) and dimethylallyl diphosphate (DMAPP), two major building blocks of isoprenoid compounds. Catalyzes the conversion of 4-diphosphocytidyl-2-C-methyl-D-erythritol 2-phosphate (CDP-ME2P) to 2-C-methyl-D-erythritol 2,4-cyclodiphosphate (ME-CPP) with a corresponding release of cytidine 5-monophosphate (CMP). The polypeptide is 2-C-methyl-D-erythritol 2,4-cyclodiphosphate synthase (Nostoc sp. (strain PCC 7120 / SAG 25.82 / UTEX 2576)).